Here is a 566-residue protein sequence, read N- to C-terminus: Putative UDP-glucuronate:xylan alpha-glucuronosyltransferase 5 (566 aa).

Residues 17–37 (LILISLSFLGLLLNFKPLFLL) traverse the membrane as a helical; Signal-anchor for type II membrane protein segment. Residues Asp372 and Asp374 each contribute to the Mn(2+) site. Substrate contacts are provided by residues 372 to 374 (DAD), 401 to 403 (NSG), 428 to 432 (NGGDQ), and 475 to 480 (HYLGLK). His475 contributes to the Mn(2+) binding site.

The protein belongs to the glycosyltransferase 8 family. Glycogenin subfamily. Mn(2+) is required as a cofactor.

The protein resides in the golgi apparatus membrane. Its function is as follows. May be involved in the substitutions of the xylan backbone in stem glucuronoxylan. The sequence is that of Putative UDP-glucuronate:xylan alpha-glucuronosyltransferase 5 (GUX5) from Arabidopsis thaliana (Mouse-ear cress).